We begin with the raw amino-acid sequence, 690 residues long: Protein arginine N-methyltransferase 7 (690 aa).

2 SAM-dependent MTase PRMT-type domains span residues 14–357 and 366–690; these read QNSW…YSLW and TKSV…QKKL.

This sequence belongs to the class I-like SAM-binding methyltransferase superfamily. Protein arginine N-methyltransferase family. PRMT7 subfamily. Expressed at low level in ovary.

Essential arginine methyltransferase that can both catalyze the formation of omega-N monomethylarginine (MMA) and symmetrical dimethylarginine (sDMA). Specifically mediates the symmetrical dimethylation of arginine residues in the small nuclear ribonucleoproteins SmD1 and SmD3. The protein is Protein arginine N-methyltransferase 7 (Art7) of Drosophila melanogaster (Fruit fly).